The following is a 382-amino-acid chain: Methylthioribose-1-phosphate isomerase (382 aa).

The Proton donor role is filled by Asp-257.

The protein belongs to the eIF-2B alpha/beta/delta subunits family. MtnA subfamily.

It localises to the cytoplasm. The protein resides in the nucleus. It carries out the reaction 5-(methylsulfanyl)-alpha-D-ribose 1-phosphate = 5-(methylsulfanyl)-D-ribulose 1-phosphate. It participates in amino-acid biosynthesis; L-methionine biosynthesis via salvage pathway; L-methionine from S-methyl-5-thio-alpha-D-ribose 1-phosphate: step 1/6. Its function is as follows. Catalyzes the interconversion of methylthioribose-1-phosphate (MTR-1-P) into methylthioribulose-1-phosphate (MTRu-1-P). This Paracoccidioides brasiliensis (strain Pb18) protein is Methylthioribose-1-phosphate isomerase.